The sequence spans 321 residues: Putative ribose-phosphate pyrophosphokinase 2 (321 aa).

Residues 41–43 and 100–101 contribute to the ATP site; these read DGE and RQ. His-134 contacts Mg(2+). D-ribose 5-phosphate contacts are provided by residues Asp-223 and 227-231; that span reads NTGVT.

The protein belongs to the ribose-phosphate pyrophosphokinase family. Class I subfamily. In terms of assembly, homohexamer. The cofactor is Mg(2+).

The protein localises to the cytoplasm. It carries out the reaction D-ribose 5-phosphate + ATP = 5-phospho-alpha-D-ribose 1-diphosphate + AMP + H(+). The protein operates within metabolic intermediate biosynthesis; 5-phospho-alpha-D-ribose 1-diphosphate biosynthesis; 5-phospho-alpha-D-ribose 1-diphosphate from D-ribose 5-phosphate (route I): step 1/1. In terms of biological role, involved in the biosynthesis of the central metabolite phospho-alpha-D-ribosyl-1-pyrophosphate (PRPP) via the transfer of pyrophosphoryl group from ATP to 1-hydroxyl of ribose-5-phosphate (Rib-5-P). The polypeptide is Putative ribose-phosphate pyrophosphokinase 2 (Lactococcus lactis subsp. lactis (strain IL1403) (Streptococcus lactis)).